The chain runs to 118 residues: Aspartate 1-decarboxylase (118 aa).

Residue Ser25 is the Schiff-base intermediate with substrate; via pyruvic acid of the active site. Ser25 is subject to Pyruvic acid (Ser). Thr57 contributes to the substrate binding site. Tyr58 acts as the Proton donor in catalysis. Residue 73 to 75 participates in substrate binding; it reads GAA.

This sequence belongs to the PanD family. Heterooctamer of four alpha and four beta subunits. It depends on pyruvate as a cofactor. Is synthesized initially as an inactive proenzyme, which is activated by self-cleavage at a specific serine bond to produce a beta-subunit with a hydroxyl group at its C-terminus and an alpha-subunit with a pyruvoyl group at its N-terminus.

Its subcellular location is the cytoplasm. It catalyses the reaction L-aspartate + H(+) = beta-alanine + CO2. The protein operates within cofactor biosynthesis; (R)-pantothenate biosynthesis; beta-alanine from L-aspartate: step 1/1. Functionally, catalyzes the pyruvoyl-dependent decarboxylation of aspartate to produce beta-alanine. This Leptospira biflexa serovar Patoc (strain Patoc 1 / Ames) protein is Aspartate 1-decarboxylase.